A 114-amino-acid polypeptide reads, in one-letter code: Ribonuclease P protein component (114 aa).

It belongs to the RnpA family. In terms of assembly, consists of a catalytic RNA component (M1 or rnpB) and a protein subunit.

It catalyses the reaction Endonucleolytic cleavage of RNA, removing 5'-extranucleotides from tRNA precursor.. In terms of biological role, RNaseP catalyzes the removal of the 5'-leader sequence from pre-tRNA to produce the mature 5'-terminus. It can also cleave other RNA substrates such as 4.5S RNA. The protein component plays an auxiliary but essential role in vivo by binding to the 5'-leader sequence and broadening the substrate specificity of the ribozyme. This is Ribonuclease P protein component from Buchnera aphidicola subsp. Baizongia pistaciae (strain Bp).